Reading from the N-terminus, the 198-residue chain is Linker for activation of T-cells family member 2 (198 aa).

Over 1-4 (MAQP) the chain is Extracellular. A helical; Signal-anchor for type III membrane protein membrane pass occupies residues 5-24 (ELLWAAAGLMLLGVAVSACV). S-palmitoyl cysteine attachment occurs at residues C23 and C26. Residues 25–198 (RCQLYATKRG…PTIDAVVLSK (174 aa)) are Cytoplasmic-facing. Y136, Y155, and Y184 each carry phosphotyrosine.

In terms of assembly, when phosphorylated, interacts with GRB2. Phosphorylated on tyrosines following cross-linking of BCR; which induces the recruitment of GRB2.

Its subcellular location is the cell membrane. Involved in BCR (B-cell antigen receptor)-mediated signaling in B-cells. May also be involved in FCER1 (high affinity immunoglobulin epsilon receptor)-mediated signaling in mast cells and FCGR1 (high affinity immunoglobulin gamma Fc receptor I)-mediated signaling in myeloid cells. Couples activation of these receptors and their associated kinases with distal intracellular events such as calcium mobilization through the recruitment of GRB2. This is Linker for activation of T-cells family member 2 (LAT2) from Gallus gallus (Chicken).